Here is a 655-residue protein sequence, read N- to C-terminus: Interferon-induced GTP-binding protein Mx2 (655 aa).

Over residues 1–18 (MVLSTEENTGVDSVNLPS) the composition is skewed to polar residues. The segment at 1–28 (MVLSTEENTGVDSVNLPSGETGLGEKDQ) is disordered. A Dynamin-type G domain is found at 60-333 (DLALPAIAVI…LISHICKSLP (274 aa)). The G1 motif stretch occupies residues 70-77 (GDQSSGKS). 70-77 (GDQSSGKS) contacts GTP. The tract at residues 95–97 (VTR) is G2 motif. The interval 171-174 (DLPG) is G3 motif. Residues 171–175 (DLPGI) and 240–243 (TKPD) contribute to the GTP site. Residues 240 to 243 (TKPD) are G4 motif. Positions 272-275 (KCRG) are G5 motif. The tract at residues 542–562 (EAEEEKKTKHGTSSSSQSQDL) is disordered. Over residues 552 to 562 (GTSSSSQSQDL) the composition is skewed to low complexity. The 89-residue stretch at 567 to 655 (MAEIFQHLNA…ARRRLAKFPG (89 aa)) folds into the GED domain.

It belongs to the TRAFAC class dynamin-like GTPase superfamily. Dynamin/Fzo/YdjA family.

Its subcellular location is the cytoplasm. In terms of biological role, interferon-induced dynamin-like GTPase with antiviral activity against vesicular stomatitis virus (VSV) and Hantaan virus (HNTV). The chain is Interferon-induced GTP-binding protein Mx2 (Mx2) from Mus musculus (Mouse).